The chain runs to 435 residues: Mitochondrial association factor 1 form a1 (435 aa).

A signal peptide spans 1 to 20 (MWRIWRCRLSFLFATGCLLG). At 21-95 (ALTAGLGSQM…SVTARRRRNR (75 aa)) the chain is on the vacuolar side. Residues 43-88 (GVADASQEAGDVVEERTERTEEQVFAPGPPRRHSSESLFPRNASVT) are disordered. Over residues 55 to 64 (VEERTERTEE) the composition is skewed to basic and acidic residues. A helical membrane pass occupies residues 96–116 (RIAPIATAVGVAVILAALYVL). Residues 117–435 (RRRRAQPPQE…ERKYKFPQGD (319 aa)) are Cytoplasmic-facing. The disordered stretch occupies residues 120–162 (RAQPPQEPEPPTRLRTPRPRAPSEQQQPSESEPPAEVPMTPDP). Residues 141-153 (PSEQQQPSESEPP) are compositionally biased toward low complexity.

Interacts with host SAMM50.

The protein resides in the parasitophorous vacuole membrane. During host cell infection by tachyzoites, does not play a role in tethering the parasitophorous vacuole to the host mitochondria, probably because it does not bind host mitochondrial import protein TOMM70. In Toxoplasma gondii, this protein is Mitochondrial association factor 1 form a1.